Consider the following 306-residue polypeptide: D-alanine--D-alanine ligase (306 aa).

Residues 107–300 (KEAYRAAGLP…FGQLCAWMVE (194 aa)) enclose the ATP-grasp domain. Position 134–184 (134–184 (MQPPYVVKPYNEGSSVGVYIVTEAANGPPVLAPDLPATLMVEEYVPGRELS)) interacts with ATP. 3 residues coordinate Mg(2+): Asp251, Glu267, and Asn269.

This sequence belongs to the D-alanine--D-alanine ligase family. Requires Mg(2+) as cofactor. Mn(2+) serves as cofactor.

The protein localises to the cytoplasm. It catalyses the reaction 2 D-alanine + ATP = D-alanyl-D-alanine + ADP + phosphate + H(+). It participates in cell wall biogenesis; peptidoglycan biosynthesis. Its function is as follows. Cell wall formation. The protein is D-alanine--D-alanine ligase of Ruegeria pomeroyi (strain ATCC 700808 / DSM 15171 / DSS-3) (Silicibacter pomeroyi).